Here is a 411-residue protein sequence, read N- to C-terminus: UPF0761 membrane protein PA0951 (411 aa).

A run of 6 helical transmembrane segments spans residues 36-56 (LFAVVPMMTVMFSMLSLIPAF), 92-112 (HLTWVGVVFLAVTAFTMLVTI), 132-152 (FLLYWAILSLGPLLLGAGFAV), 174-194 (LLGLMPLAFSVAAFTLLYSAV), 207-229 (GGVFTAVLFEAAKTLFGLYVSLF), and 244-264 (IFLLWIYLSWMIVLFGAVLVC).

Belongs to the UPF0761 family.

Its subcellular location is the cell inner membrane. The polypeptide is UPF0761 membrane protein PA0951 (Pseudomonas aeruginosa (strain ATCC 15692 / DSM 22644 / CIP 104116 / JCM 14847 / LMG 12228 / 1C / PRS 101 / PAO1)).